We begin with the raw amino-acid sequence, 1074 residues long: ADAMTS-like protein 4 (1074 aa).

Residues 1–24 form the signal peptide; that stretch reads MENWTGRPWLYLLLLLSLPQLCLD. Residues 48–93 form the TSP type-1 1 domain; sequence GPWVQWASCSQPCGVGVQRRSRTCQLPTVQLHPSLPLPPRPPRHPE. A disordered region spans residues 77–342; it reads QLHPSLPLPP…QHPGAWLPLL (266 aa). The segment covering 103-119 has biased composition (polar residues); the sequence is RPQTSPETLPLYRTQSR. Over residues 132–152 the composition is skewed to basic and acidic residues; that stretch reads LGREETQEIRAARRSRLRDPI. Polar residues predominate over residues 206-226; the sequence is ANGSPQTELPPTELSVHTPSP. Over residues 310 to 323 the composition is skewed to gly residues; that stretch reads GQQGQGPWGTGGTP. Residue Asn490 is glycosylated (N-linked (GlcNAc...) (complex) asparagine). TSP type-1 domains lie at 723–782, 783–842, 845–909, 910–969, and 970–1026; these read CPPY…QLRL, CGHW…GPCT, WFHS…GPCE, RTWR…QGQA, and CQDR…QPCS. N-linked (GlcNAc...) asparagine glycosylation occurs at Asn773. The 38-residue stretch at 1029-1066 folds into the PLAC domain; that stretch reads PDDQCKDSSPHCPLVVQARLCVYPYYTATCCRSCAHVL.

As to quaternary structure, interacts with CTSB. Interacts with FBN1. In terms of processing, N-glycosylated. Can be O-fucosylated by POFUT2 on a serine or a threonine residue found within the consensus sequence C1-X(2)-(S/T)-C2-G of the TSP type-1 repeat domains where C1 and C2 are the first and second cysteine residue of the repeat, respectively. Fucosylated repeats can then be further glycosylated by the addition of a beta-1,3-glucose residue by the glucosyltransferase, B3GALTL. Fucosylation mediates the efficient secretion of ADAMTS family members. Can also be C-glycosylated with one or two mannose molecules on tryptophan residues within the consensus sequence W-X-X-W of the TPRs. N- and C-glycosylations can also facilitate secretion. In terms of tissue distribution, expressed in colon, heart, leukocyte, liver, lung, skeletal muscle, spleen, testis and placenta. Weaker expression in bone marrow, brain tissue, kidney and pancreas. Expression studies in fetal tissues reveal strong expression in heart, kidney, liver, lung and skeletal muscle, but weaker expression in fetal brain and skin.

Its subcellular location is the secreted. The protein resides in the extracellular space. It is found in the extracellular matrix. In terms of biological role, positive regulation of apoptosis. May facilitate FBN1 microfibril biogenesis. In Homo sapiens (Human), this protein is ADAMTS-like protein 4 (ADAMTSL4).